The sequence spans 375 residues: DNA replication and repair protein RecF (375 aa).

An ATP-binding site is contributed by 30 to 37 (GENAQGKT).

This sequence belongs to the RecF family.

It localises to the cytoplasm. In terms of biological role, the RecF protein is involved in DNA metabolism; it is required for DNA replication and normal SOS inducibility. RecF binds preferentially to single-stranded, linear DNA. It also seems to bind ATP. This chain is DNA replication and repair protein RecF, found in Bacillus mycoides (strain KBAB4) (Bacillus weihenstephanensis).